Reading from the N-terminus, the 321-residue chain is Serpentine receptor class delta-63 (321 aa).

7 helical membrane passes run L14–T34, V41–A61, Y83–V103, L128–I148, A190–W208, N240–I260, and T273–I293.

Belongs to the nematode receptor-like protein srd family.

It is found in the membrane. This chain is Serpentine receptor class delta-63 (srd-63), found in Caenorhabditis elegans.